The following is a 187-amino-acid chain: Elongation factor P (187 aa).

This sequence belongs to the elongation factor P family.

The protein localises to the cytoplasm. It functions in the pathway protein biosynthesis; polypeptide chain elongation. Functionally, involved in peptide bond synthesis. Stimulates efficient translation and peptide-bond synthesis on native or reconstituted 70S ribosomes in vitro. Probably functions indirectly by altering the affinity of the ribosome for aminoacyl-tRNA, thus increasing their reactivity as acceptors for peptidyl transferase. This chain is Elongation factor P, found in Mycobacterium avium (strain 104).